The primary structure comprises 288 residues: Formamidopyrimidine-DNA glycosylase (288 aa).

The active-site Schiff-base intermediate with DNA is P2. Catalysis depends on E3, which acts as the Proton donor. The active-site Proton donor; for beta-elimination activity is K58. DNA contacts are provided by H101, R124, and R169. An FPG-type zinc finger spans residues 254-288; sequence LVYDRAGLPCRVCGTPIRQIVQGQRSTFYCPACQR. The active-site Proton donor; for delta-elimination activity is the R278.

The protein belongs to the FPG family. Monomer. Zn(2+) serves as cofactor.

It catalyses the reaction Hydrolysis of DNA containing ring-opened 7-methylguanine residues, releasing 2,6-diamino-4-hydroxy-5-(N-methyl)formamidopyrimidine.. The enzyme catalyses 2'-deoxyribonucleotide-(2'-deoxyribose 5'-phosphate)-2'-deoxyribonucleotide-DNA = a 3'-end 2'-deoxyribonucleotide-(2,3-dehydro-2,3-deoxyribose 5'-phosphate)-DNA + a 5'-end 5'-phospho-2'-deoxyribonucleoside-DNA + H(+). Involved in base excision repair of DNA damaged by oxidation or by mutagenic agents. Acts as a DNA glycosylase that recognizes and removes damaged bases. Has a preference for oxidized purines, such as 7,8-dihydro-8-oxoguanine (8-oxoG). Has AP (apurinic/apyrimidinic) lyase activity and introduces nicks in the DNA strand. Cleaves the DNA backbone by beta-delta elimination to generate a single-strand break at the site of the removed base with both 3'- and 5'-phosphates. The sequence is that of Formamidopyrimidine-DNA glycosylase from Ralstonia nicotianae (strain ATCC BAA-1114 / GMI1000) (Ralstonia solanacearum).